A 1909-amino-acid chain; its full sequence is NFX1-type zinc finger-containing protein 1 (1909 aa).

Basic and acidic residues-rich tracts occupy residues 1–12 (MEDRRPHLEARP) and 76–107 (RNQEGHTSDEARDQRQSQNDTRRRNDDQEGRS). Disordered stretches follow at residues 1 to 133 (MEDR…QPQQ) and 787 to 813 (TQSASPAGPENTAQAEGEEEEEGEEEG). Positions 113-122 (SSDTFQQWHT) are enriched in polar residues. Residues 802–813 (EGEEEEEGEEEG) show a composition bias toward acidic residues. Residues 939–964 (RRRILSYERQYRTWAERMAELRLQED) adopt a coiled-coil conformation. 4 consecutive NF-X1-type zinc fingers follow at residues 1291–1313 (CGHVCTRACHPYDSSHKEFQCMK), 1375–1393 (CGHRCSHLCGEDCVRLCSE), 1433–1455 (CGHPCPGSCHSCFEGRFHERCQQ), and 1463–1480 (CSHKCQEPCTGECPPCQR). Residues 1733-1764 (LAKKRLSFSSQELSDLQSEIQRLTYLVNLLMR) are a coiled coil. The segment at 1818-1889 (ISDEERVQIV…LASEMDGAQH (72 aa)) adopts an RZ-type zinc-finger fold. Zn(2+)-binding residues include cysteine 1840, histidine 1844, cysteine 1860, and cysteine 1863.

Belongs to the ZNFX1 family. As to quaternary structure, interacts with MAVS.

The protein localises to the mitochondrion outer membrane. It localises to the cytoplasm. Its subcellular location is the stress granule. Its function is as follows. RNA-binding protein that initiates the antiviral response and is required to restrict the replication of RNA viruses. Acts as a double-stranded RNA (dsRNA) sensor that recognizes viral RNA and then interacts with MAVS to initiate the type I interferon response. Also required for immunity against some bacteria, such as mycobacteria. In Mus musculus (Mouse), this protein is NFX1-type zinc finger-containing protein 1.